The sequence spans 1217 residues: MYIKQVIIQGFRSYRDQTIVDPFSSKHNVIVGRNGSGKSNFFYAIQFVLSDEFSHLRPEQRLALLHEGTGPRVISAFVEIIFDNSDNRLPIDKEEVSLRRVIGAKKDQYFLDKKMVTKNDVMNLLESAGFSRSNPYYIVKQGKINQMATAPDSQRLKLLREVAGTRVYDERKEESISLMKETEGKREKINELLKYIEERLHTLEEEKEELAQYQKWDKMRRALEYTIYNQELNETRAKLDELSAKRETSGEKSRQLRDAQQDARDKMEDIERQVRELKTKISAMKEEKEQLSAERQEQIKQRTKLELKAKDLQDELAGNSEQRKRLLKERQKLLEKIEEKQKELAETEPKFNSVKEKEERGIARLAQATQERTDLYAKQGRGSQFTSKEERDKWIKKELKSLDQAINDKKRQIAAIHKDLEDTEANKEKNLEQYNKLDQDLNEVKARVEELDRKYYEVKNKKDELQSERNYLWREENAEQQALAAKREDLEKKQQLLRAATGKAILNGIDSINKVLDHFRRKGINQHVQNGYHGIVMNNFECEPAFYTCVEVTAGNRLFYHIVDSDEVSTKILMEFNKMNLPGEVTFLPLNKLDVRDTAYPETNDAIPMISKLRYNPRFDKAFKHVFGKTLICRSMEVSTQLARAFTMDCITLEGDQVSHRGALTGGYYDTRKSRLELQKDVRKAEEELGELEAKLNENLRRNIERINNEIDQLMNQMQQIETQQRKFKASRDSILSEMKMLKEKRQQSEKTFMPKQRSLQSLEASLHAMESTRESLKAELGTDLLSQLSLEDQKRVDALNDEIRQLQQENRQLLNERIKLEGIITRVETYLNENLRKRLDQVEQELNELRETEGGTVLTATTSELEAINKRVKDTMARSEDLDNSIDKTEAGIKELQKSMERWKNMEKEHMDAINHDTKELEKMTNRQGMLLKKKEECMKKIRELGSLPQEAFEKYQTLSLKQLFRKLEQCNTELKKYSHVNKKALDQFVNFSEQKEKLIKRQEELDRGYKSIMELMNVLELRKYEAIQLTFKQVSKNFSEVFQKLVPGGKATLVMKKGDVEGSQSQDEGEGSGESERGSGSQSSVPSVDQFTGVGIRVSFTGKQGEMREMQQLSGGQKSLVALALIFAIQKCDPAPFYLFDEIDQALDAQHRKAVSDMIMELAVHAQFITTTFRPELLESADKFYGVKFRNKVSHIDVITAEMAKDFVEDDTTHG.

Residue 32–39 (GRNGSGKS) coordinates ATP. 3 positions are modified to N6-acetyllysine: Lys105, Lys106, and Lys140. 2 coiled-coil regions span residues 179–350 (MKET…TEPK) and 393–503 (KWIK…ATGK). Positions 242–268 (LSAKRETSGEKSRQLRDAQQDARDKME) are disordered. One can recognise an SMC hinge domain in the interval 530-642 (NGYHGIVMNN…CRSMEVSTQL (113 aa)). Coiled-coil stretches lie at residues 669 to 916 (YDTR…DAIN) and 958 to 989 (QTLSLKQLFRKLEQCNTELKKYSHVNKKALDQ). A Phosphothreonine modification is found at Thr783. Residues Ser787 and Ser886 each carry the phosphoserine modification. Ser1013, Ser1065, Ser1067, Ser1074, and Ser1083 each carry phosphoserine. The segment at 1059-1090 (KGDVEGSQSQDEGEGSGESERGSGSQSSVPSV) is disordered. Lys1190 is modified (N6-acetyllysine).

This sequence belongs to the SMC family. SMC3 subfamily. As to quaternary structure, forms a heterodimer with SMC1A or SMC1B in cohesin complexes. Cohesin complexes are composed of the SMC1 (SMC1A or SMC1B) and SMC3 heterodimer attached via their SMC hinge domain, RAD21 which link them, and one STAG protein (STAG1, STAG2 or STAG3), which interacts with RAD21. Also found in meiosis-specific cohesin complexes. Found in a complex with SMC1A, CDCA5 and RAD21, PDS5A/SCC-112 and PDS5B/APRIN. Interacts with NUMA1, and forms a ternary complex with KIF3B and KIFAP3, suggesting a function in tethering the chromosomes to the spindle pole and in chromosome movement. Interacts with PDS5A and WAPL; regulated by SMC3 acetylation. Interacts (via SMC hinge domain) with KIAA1328 (via N- and C-terminal domains). Interacts with DDX11. Found in a cohesin complex with SMC1A, STAG1 and RAD21. The cohesin complex interacts with the cohesin loading complex subunits NIPBL/Scc2 (via HEAT repeats) and MAU2/Scc4. NIPBL directly contacts all members of the complex, RAD21, SMC1A/B, SMC3 and STAG1. Interacts with MXI1, MXD3, MXD4, SYCP2, RPGR and STAG3. Interacts with the NuRD complex component HDAC2; the interaction is direct. Post-translationally, ubiquitinated by the DCX(DCAF15) complex, leading to its degradation. In terms of processing, phosphorylated at Ser-1083 in a SPO11-dependent manner. Acetylation at Lys-105 and Lys-106 by ESCO1 is important for genome stability and S phase sister chromatid cohesion. Regulated by DSCC1, it is required for processive DNA synthesis, coupling sister chromatid cohesion establishment during S phase to DNA replication. Deacetylation by HDAC8, regulates release of the cohesin complex from chromatin.

It is found in the nucleus. It localises to the chromosome. The protein localises to the centromere. In terms of biological role, central component of cohesin, a complex required for chromosome cohesion during the cell cycle. The cohesin complex may form a large proteinaceous ring within which sister chromatids can be trapped. At anaphase, the complex is cleaved and dissociates from chromatin, allowing sister chromatids to segregate. Cohesion is coupled to DNA replication and is involved in DNA repair. The cohesin complex also plays an important role in spindle pole assembly during mitosis and in chromosomes movement. This is Structural maintenance of chromosomes protein 3 (SMC3) from Homo sapiens (Human).